We begin with the raw amino-acid sequence, 307 residues long: MILLSYLLTYLLCALTCSARAIHNGRSLIPRAGSLEQVTDFGDNPSNVKMYIYVPTNLASNPGIIVAIHYCTGTAQAYYQGSPYAQLAETHGFIVIYPESPYEGTCWDVSSQATLTHNGGGNSNSIANMVTWTTKQYNADSSKVFVTGTSSGAMMTNVMAATYPNLFAAGVAYAGVPAGCFLSTADQPDAWNSTCAQGQSITTPEHWASIAEAMYPDYSGSRPKMQIYHGNVDTTLYPQNYEETCKQWAGVFGYNYDAPESTESNTPEANWSRTTWGPNLQGILAGGVGHNIQIHGDEDMKWFGFTN.

Positions M1–A19 are cleaved as a signal peptide. The active-site Charge relay system is S150. N-linked (GlcNAc...) asparagine glycosylation is found at N192 and N270.

It belongs to the carbohydrate esterase 1 (CE1) family. AxeA subfamily. Monomer.

It is found in the secreted. The enzyme catalyses Deacetylation of xylans and xylo-oligosaccharides.. The protein operates within glycan degradation; xylan degradation. Functionally, acetylxylan esterase involved in the hydrolysis of xylan, a major structural heterogeneous polysaccharide found in plant biomass representing the second most abundant polysaccharide in the biosphere, after cellulose. Degrades acetylated xylans by cleaving acetyl side groups from the hetero-xylan backbone. The protein is Probable acetylxylan esterase A (axeA) of Aspergillus flavus.